Consider the following 332-residue polypeptide: 2,3-diketo-L-gulonate reductase (332 aa).

His-44 serves as the catalytic Proton donor. NAD(+)-binding positions include 168-174, 224-225, and 304-306; these read ITMVDMS, WK, and GHE.

The protein belongs to the LDH2/MDH2 oxidoreductase family. DlgD subfamily. As to quaternary structure, homodimer.

The protein resides in the cytoplasm. It catalyses the reaction 3-dehydro-L-gulonate + NAD(+) = 2,3-dioxo-L-gulonate + NADH + H(+). The enzyme catalyses 3-dehydro-L-gulonate + NADP(+) = 2,3-dioxo-L-gulonate + NADPH + H(+). Functionally, catalyzes the reduction of 2,3-diketo-L-gulonate in the presence of NADH, to form 3-keto-L-gulonate. The chain is 2,3-diketo-L-gulonate reductase from Escherichia coli O127:H6 (strain E2348/69 / EPEC).